A 184-amino-acid polypeptide reads, in one-letter code: Prolyl-tRNA synthetase associated domain-containing protein 1 (184 aa).

This sequence belongs to the PRORSD1 family.

In Danio rerio (Zebrafish), this protein is Prolyl-tRNA synthetase associated domain-containing protein 1 (Prorsd1).